Consider the following 119-residue polypeptide: Large ribosomal subunit protein uL22 (119 aa).

Belongs to the universal ribosomal protein uL22 family. In terms of assembly, part of the 50S ribosomal subunit.

This protein binds specifically to 23S rRNA; its binding is stimulated by other ribosomal proteins, e.g. L4, L17, and L20. It is important during the early stages of 50S assembly. It makes multiple contacts with different domains of the 23S rRNA in the assembled 50S subunit and ribosome. Functionally, the globular domain of the protein is located near the polypeptide exit tunnel on the outside of the subunit, while an extended beta-hairpin is found that lines the wall of the exit tunnel in the center of the 70S ribosome. The chain is Large ribosomal subunit protein uL22 from Microcystis aeruginosa (strain NIES-843 / IAM M-2473).